The chain runs to 118 residues: uncharacterized protein (118 aa).

It belongs to the transposase IS3/IS150/IS904 family.

This is an uncharacterized protein from Haemophilus influenzae (strain ATCC 51907 / DSM 11121 / KW20 / Rd).